Reading from the N-terminus, the 601-residue chain is Glutathione-regulated potassium-efflux system protein KefB (601 aa).

Transmembrane regions (helical) follow at residues S4–A24, I29–F49, E55–L75, I87–M107, A115–M135, V152–G172, H177–G197, F207–G227, L230–L250, G268–Y288, L291–L311, M324–A344, and A356–V376. An RCK N-terminal domain is found at K400 to T519.

This sequence belongs to the monovalent cation:proton antiporter 2 (CPA2) transporter (TC 2.A.37) family. KefB subfamily. In terms of assembly, interacts with the regulatory subunit KefG.

The protein localises to the cell inner membrane. Its function is as follows. Pore-forming subunit of a potassium efflux system that confers protection against electrophiles. Catalyzes K(+)/H(+) antiport. The protein is Glutathione-regulated potassium-efflux system protein KefB of Escherichia coli O17:K52:H18 (strain UMN026 / ExPEC).